The sequence spans 273 residues: Putative cysteine-rich repeat secretory protein 40 (273 aa).

Residues 1–32 (MYPSCSLLQRLVWFPFLALVATQLLFIRNVSS) form the signal peptide. Gnk2-homologous domains are found at residues 39–141 (YLHH…SISV) and 151–264 (YENN…LYPF).

This sequence belongs to the cysteine-rich repeat secretory protein family.

Its subcellular location is the secreted. The polypeptide is Putative cysteine-rich repeat secretory protein 40 (CRRSP40) (Arabidopsis thaliana (Mouse-ear cress)).